Reading from the N-terminus, the 226-residue chain is UPF0758 protein GK2618 (226 aa).

The MPN domain maps to 104–226; that stretch reads VIRCPEDGAK…FISLKEKGYV (123 aa). Zn(2+)-binding residues include His175, His177, and Asp188. Positions 175–188 match the JAMM motif motif; sequence HNHPSGDPTPSRED.

Belongs to the UPF0758 family.

This is UPF0758 protein GK2618 from Geobacillus kaustophilus (strain HTA426).